The chain runs to 243 residues: Large ribosomal subunit protein uL2 (243 aa).

Over residues 1–12 the composition is skewed to basic residues; sequence MGRRIQGQRRGR. 2 disordered regions span residues 1-38 and 198-243; these read MGRR…SDDT and VDHP…GSSE. Basic and acidic residues-rich tracts occupy residues 24-34 and 221-231; these read YKAELSHKQSE and PPGRKVGDIAS.

Belongs to the universal ribosomal protein uL2 family. As to quaternary structure, part of the 50S ribosomal subunit. Forms a bridge to the 30S subunit in the 70S ribosome.

One of the primary rRNA binding proteins. Required for association of the 30S and 50S subunits to form the 70S ribosome, for tRNA binding and peptide bond formation. It has been suggested to have peptidyltransferase activity; this is somewhat controversial. Makes several contacts with the 16S rRNA in the 70S ribosome. The polypeptide is Large ribosomal subunit protein uL2 (Haloquadratum walsbyi (strain DSM 16790 / HBSQ001)).